A 1639-amino-acid polypeptide reads, in one-letter code: RIMS-binding protein 3A (1639 aa).

Disordered regions lie at residues 1–22 (MAKDSPSPLGASPKKPGCSSPA), 215–240 (GSPDPQAVHSLEEPLPQTSSGSCHAP), and 295–364 (SLDS…LTPS). Residues 21–143 (PAAAVLENQR…ELQRQLAEEL (123 aa)) are a coiled coil. Positions 326–339 (SPPPSPLPPPPPPS) are enriched in pro residues. 2 coiled-coil regions span residues 409 to 442 (QADEKVKRLKVKRAELTGLARRLADRARKLQETN) and 480 to 619 (LAKD…AEEN). Positions 697-811 (CRPGHPPEQP…DRDTASEVDD (115 aa)) are disordered. Polar residues-rich tracts occupy residues 707-718 (WETSQMPESQVK) and 761-775 (SVPQVSETVPASQPL). Low complexity predominate over residues 776–790 (SKKTSSQSNSSSEGS). The SH3 1 domain maps to 832 to 899 (PKLKIFMAQY…PSNFVEQIPD (68 aa)). Fibronectin type-III domains lie at 995–1083 (APMQ…TLLA) and 1088–1184 (PPLD…IPED). Disordered stretches follow at residues 1251–1273 (PRRQSPVSNLGSEGECPSSGAGS) and 1292–1330 (QKSPQNHRPPSVSDQPGEKENCSQHMGTSKSPAPGFIHL). Polar residues predominate over residues 1293–1305 (KSPQNHRPPSVSD). 2 consecutive SH3 domains span residues 1452–1520 (TPAR…EMEV) and 1569–1636 (WTPK…HMSL).

It belongs to the RIMBP family. Interacts with LRGUK (via guanylate kinase-like domain). Interacts (via C-terminus) with HOOK1 (via coiled-coil region).

It localises to the cytoplasm. The protein resides in the cytoskeleton. Functionally, probable component of the manchette, a microtubule-based structure which plays a key role in sperm head morphogenesis during late stages of sperm development. In Homo sapiens (Human), this protein is RIMS-binding protein 3A (RIMBP3).